The chain runs to 331 residues: N-arachidonyl glycine receptor (331 aa).

The Extracellular segment spans residues 1–26 (MITLNNQDQPVPFNNSYPDEYEIAAL). N14 carries an N-linked (GlcNAc...) asparagine glycan. The chain crosses the membrane as a helical span at residues 27-47 (VFYSCIFIIGLFVNITALWVF). The Cytoplasmic portion of the chain corresponds to 48 to 56 (SCTTKKRTT). Residues 57–77 (VTIYMMNVALVDLIFIMTLPF) form a helical membrane-spanning segment. Residues 78 to 95 (RMFYYAKDEWPFGEYFCQ) are Extracellular-facing. A disulfide bond links C94 and C172. Residues 96–116 (ILGALTVFYPSIALWLLAFIS) traverse the membrane as a helical segment. Residues 117-138 (ADRYMAIVQPKYAKELKNTCKA) lie on the Cytoplasmic side of the membrane. A helical membrane pass occupies residues 139-159 (VLACVGVWIMTLTTTIPLLLL). Over 160 to 191 (HKDPDKDSTPATCLKISDIVYLKAVNVLNFTR) the chain is Extracellular. The N-linked (GlcNAc...) asparagine glycan is linked to N188. Residues 192-212 (LTFFFLIPLFIMIGCYLVIIH) form a helical membrane-spanning segment. Over 213 to 232 (NLLHGRTSKLKPKVKEKSIR) the chain is Cytoplasmic. The chain crosses the membrane as a helical span at residues 233 to 253 (IIITLLVQVLVCFMPFHICFA). The Extracellular portion of the chain corresponds to 254-268 (FLMLGTGENSYSPWG). Residues 269-289 (AFTTFLMNLSTCLDVILYYIV) traverse the membrane as a helical segment. Residues 290 to 331 (SKQFQARVISVMLYRNYLRGMRRKSFRSGSLRSLSNINSEML) are Cytoplasmic-facing. A Phosphoserine modification is found at S322.

The protein belongs to the G-protein coupled receptor 1 family.

The protein resides in the cell membrane. Its subcellular location is the cytoplasmic vesicle membrane. In terms of biological role, g protein-coupled receptor (GPCR) that plays a role in diverse physiological processes particularly within the immune and nervous systems. Becomes active when triggered by various endogenous ligands including endocannabinoid N-arachidonyl glycine (NAGly), delta-9-tetrahydrocannabinol or resolvin D2/RvD2 derived from the omega-3 fatty acid docosahexaenoic acid (DHA). Upon RvD2 binding, facilitates the resolution of inflammation, aiding in tissue repair and homeostasis. Mechanistically, RvD2 ligation initiates Galphas protein coupling, activation of cAMP-PKA signaling pathway and phosphorylation of STAT3, leading to RvD2-stimulated macrophage phagocytosis. Mediates NAGly-induced process of reorganization of actin filaments and induction of acrosomal exocytosis. Activation by N-arachidonoyl glycine (NAGly) can also induce apoptosis in macrophages. Plays a role in homeostasis of CD8+ subsets of intraepithelial lymphocytes (IELs) (CD8alphaalpha and CD8alphabeta IELs) in small intestine by supporting preferential migration of CD8alphaalpha T-cells to intraepithelial compartment over lamina propria compartment, and by mediating their reconstitution into small intestine after bone marrow transplant. Participates also in hypotensive responses, mediating reduction in intraocular and blood pressure. This chain is N-arachidonyl glycine receptor, found in Macaca fascicularis (Crab-eating macaque).